The primary structure comprises 98 residues: MSMVYINIFLAFIMSLMGLLMYRSHLMSSLLCLEGMMLSLFIMMAVAILNNHLTLASMTPIILLVFAACEAALGLSLLVMVSNTYGTDYVQNLNLLQC.

Helical transmembrane passes span 1–21, 29–49, and 61–81; these read MSMVYINIFLAFIMSLMGLLM, SLLCLEGMMLSLFIMMAVAIL, and IILLVFAACEAALGLSLLVMV.

This sequence belongs to the complex I subunit 4L family. In terms of assembly, core subunit of respiratory chain NADH dehydrogenase (Complex I) which is composed of 45 different subunits.

The protein localises to the mitochondrion inner membrane. The catalysed reaction is a ubiquinone + NADH + 5 H(+)(in) = a ubiquinol + NAD(+) + 4 H(+)(out). Functionally, core subunit of the mitochondrial membrane respiratory chain NADH dehydrogenase (Complex I) which catalyzes electron transfer from NADH through the respiratory chain, using ubiquinone as an electron acceptor. Part of the enzyme membrane arm which is embedded in the lipid bilayer and involved in proton translocation. This is NADH-ubiquinone oxidoreductase chain 4L (MT-ND4L) from Felis catus (Cat).